The chain runs to 141 residues: Protein MGF 100-2L (141 aa).

The protein belongs to the asfivirus MGF 100 family.

Plays a role in virus cell tropism, and may be required for efficient virus replication in macrophages. The polypeptide is Protein MGF 100-2L (African swine fever virus (strain Badajoz 1971 Vero-adapted) (Ba71V)).